The sequence spans 247 residues: Ribosomal RNA large subunit methyltransferase E (247 aa).

Residues 1-21 (MKVNPKNSPKDNLKDSPKVSA) are disordered. Over residues 8–17 (SPKDNLKDSP) the composition is skewed to basic and acidic residues. Residues Gly80, Trp82, Asp108, Asp124, and Asp153 each contribute to the S-adenosyl-L-methionine site. The active-site Proton acceptor is Lys193.

Belongs to the class I-like SAM-binding methyltransferase superfamily. RNA methyltransferase RlmE family.

The protein localises to the cytoplasm. The catalysed reaction is uridine(2552) in 23S rRNA + S-adenosyl-L-methionine = 2'-O-methyluridine(2552) in 23S rRNA + S-adenosyl-L-homocysteine + H(+). Specifically methylates the uridine in position 2552 of 23S rRNA at the 2'-O position of the ribose in the fully assembled 50S ribosomal subunit. This chain is Ribosomal RNA large subunit methyltransferase E, found in Polaromonas sp. (strain JS666 / ATCC BAA-500).